Here is a 436-residue protein sequence, read N- to C-terminus: Histidinol dehydrogenase (436 aa).

NAD(+) is bound by residues Tyr135, Gln197, and Asn220. Thr243, Gln265, and His268 together coordinate substrate. 2 residues coordinate Zn(2+): Gln265 and His268. Residues Glu334 and His335 each act as proton acceptor in the active site. Substrate contacts are provided by His335, Asp368, Glu422, and His427. Asp368 is a binding site for Zn(2+). A Zn(2+)-binding site is contributed by His427.

This sequence belongs to the histidinol dehydrogenase family. Zn(2+) serves as cofactor.

It carries out the reaction L-histidinol + 2 NAD(+) + H2O = L-histidine + 2 NADH + 3 H(+). Its pathway is amino-acid biosynthesis; L-histidine biosynthesis; L-histidine from 5-phospho-alpha-D-ribose 1-diphosphate: step 9/9. Functionally, catalyzes the sequential NAD-dependent oxidations of L-histidinol to L-histidinaldehyde and then to L-histidine. This chain is Histidinol dehydrogenase, found in Deinococcus radiodurans (strain ATCC 13939 / DSM 20539 / JCM 16871 / CCUG 27074 / LMG 4051 / NBRC 15346 / NCIMB 9279 / VKM B-1422 / R1).